We begin with the raw amino-acid sequence, 134 residues long: Small ribosomal subunit protein uS11 (134 aa).

Positions 113-122 are enriched in polar residues; sequence SSITDATPQP. The interval 113–134 is disordered; it reads SSITDATPQPHNGCRPTKRRKV.

It belongs to the universal ribosomal protein uS11 family. Part of the 30S ribosomal subunit. Interacts with proteins S7 and S18. Binds to IF-3.

Located on the platform of the 30S subunit, it bridges several disparate RNA helices of the 16S rRNA. Forms part of the Shine-Dalgarno cleft in the 70S ribosome. The sequence is that of Small ribosomal subunit protein uS11 from Corynebacterium aurimucosum (strain ATCC 700975 / DSM 44827 / CIP 107346 / CN-1) (Corynebacterium nigricans).